A 298-amino-acid polypeptide reads, in one-letter code: Tyrosine recombinase XerD (298 aa).

Residues 3 to 88 (ALDHPLIDQF…GLRGFFRYLL (86 aa)) form the Core-binding (CB) domain. In terms of domain architecture, Tyr recombinase spans 109–292 (PLPKSLSEAD…AKARLQQLHA (184 aa)). Residues arginine 149, lysine 173, histidine 244, arginine 247, and histidine 270 contribute to the active site. Tyrosine 279 (O-(3'-phospho-DNA)-tyrosine intermediate) is an active-site residue.

The protein belongs to the 'phage' integrase family. XerD subfamily. Forms a cyclic heterotetrameric complex composed of two molecules of XerC and two molecules of XerD.

The protein resides in the cytoplasm. Its function is as follows. Site-specific tyrosine recombinase, which acts by catalyzing the cutting and rejoining of the recombining DNA molecules. The XerC-XerD complex is essential to convert dimers of the bacterial chromosome into monomers to permit their segregation at cell division. It also contributes to the segregational stability of plasmids. The sequence is that of Tyrosine recombinase XerD from Pseudomonas putida (strain ATCC 47054 / DSM 6125 / CFBP 8728 / NCIMB 11950 / KT2440).